Consider the following 660-residue polypeptide: F-box/LRR-repeat protein 5 (660 aa).

Residues 1–157 (MAPFPDEVDL…IKKKVIAQHC (157 aa)) form a hemerythrin-like region. The Fe(3+) site is built by His-15, His-57, Glu-58, Glu-61, His-80, His-124, and Glu-127. In terms of domain architecture, F-box spans 200 to 246 (SASICNLPPEVMLNIFSYLNPQDLCRCSQVNTKWAQLARTGSLWRHL). The tract at residues 283-305 (YQEWDEDADIDESEETGEDDPSI) is disordered. Residues 285–303 (EWDEDADIDESEETGEDDP) show a composition bias toward acidic residues. LRR repeat units lie at residues 311–337 (EKEL…VLAY), 338–362 (SSAT…LDLT), 363–389 (QTDI…DLSG), 390–417 (CEKI…RLLK), 551–576 (IRDI…SLSG), 577–604 (CHQI…NLSG), 605–630 (CLNV…HFYY), and 631–649 (CDNI…QNLQ). [2Fe-2S] cluster is bound by residues Cys-631, Cys-645, Cys-655, and Cys-656.

Part of a SCF (SKP1-cullin-F-box) protein ligase complex. [2Fe-2S] cluster serves as cofactor. Post-translationally, ubiquitinated upon iron and oxygen depletion, leading to its degradation by the proteasome. Ubiquitination is regulated by the hemerythrin-like region that acts as an oxygen and iron sensor.

It localises to the cytoplasm. Its subcellular location is the perinuclear region. It is found in the nucleus. It participates in protein modification; protein ubiquitination. In terms of biological role, component of some SCF (SKP1-cullin-F-box) protein ligase complex that plays a central role in iron homeostasis by promoting the ubiquitination and subsequent degradation of ireb2/irp2. Upon high iron and oxygen level, it specifically recognizes and binds ireb2/irp2, promoting its ubiquitination and degradation by the proteasome. This is F-box/LRR-repeat protein 5 (fbxl5) from Xenopus tropicalis (Western clawed frog).